The sequence spans 332 residues: DNA-directed RNA polymerase 2A (332 aa).

Catalysis depends on residues D33, K108, and D265.

Belongs to the phage and mitochondrial RNA polymerase family.

The catalysed reaction is RNA(n) + a ribonucleoside 5'-triphosphate = RNA(n+1) + diphosphate. Its function is as follows. DNA-dependent RNA polymerase catalyzes the transcription of DNA into RNA using the four ribonucleoside triphosphates as substrates. The chain is DNA-directed RNA polymerase 2A (RPOT2-SYL) from Nicotiana tabacum (Common tobacco).